The chain runs to 266 residues: Type II iodothyronine deiodinase (266 aa).

The Lumenal segment spans residues 1-9; it reads MGLLSVDLL. The helical; Signal-anchor for type III membrane protein transmembrane segment at 10–34 threads the bilayer; sequence ITLQILPVFFSNCLFLALYDSVILL. At 35–266 the chain is on the cytoplasmic side; the sequence is KHVALLLSRS…KNFSKRUILD (232 aa). Sec-130 is a catalytic residue. 2 non-standard amino acids (selenocysteine) are found at residues Sec-130 and Sec-263.

Belongs to the iodothyronine deiodinase family. Predominantly monomer. Can form homodimers but homodimerization is not essential for enzyme activity. Interacts with USP20 and USP33. Interacts with MARCHF6. In terms of processing, ubiquitinated by MARCHF6, leading to its degradation by the proteasome. Deubiquitinated by USP20 and USP33. As to expression, expressed in mammary gland and in brain.

Its subcellular location is the endoplasmic reticulum membrane. The enzyme catalyses 3,3',5-triiodo-L-thyronine + iodide + A + H(+) = L-thyroxine + AH2. It carries out the reaction 3,3'-diiodo-L-thyronine + iodide + A + H(+) = 3,3',5'-triiodo-L-thyronine + AH2. It catalyses the reaction 3'-iodo-L-thyronine + iodide + A + H(+) = 3',5'-diiodo-L-thyronine + AH2. The catalysed reaction is 3,3'-diiodothyronamine + iodide + A + H(+) = 3,3',5'-triiodothyronamine + AH2. The enzyme catalyses 3'-iodothyronamine + iodide + A + H(+) = 3',5'-diiodothyronamine + AH2. Its function is as follows. Plays a crucial role in the metabolism of thyroid hormones (TH) and has specific roles in TH activation and inactivation by deiodination. Catalyzes the deiodination of L-thyroxine (T4) to 3,5,3'-triiodothyronine (T3) and 3,3',5'-triiodothyronine (rT3) to 3,3'-diiodothyronine (3,3'-T2) via outer-ring deiodination (ORD). Catalyzes the deiodination of 3',5'-diiodothyronine (3',5'-T2) to 3'-monoiodothyronine (3'-T1) via ORD. Catalyzes the phenolic ring deiodinations of 3,3',5'-triiodothyronamine and 3',5'- diiodothyronamine. The chain is Type II iodothyronine deiodinase (Dio2) from Mus musculus (Mouse).